A 568-amino-acid polypeptide reads, in one-letter code: Phosphoprotein (568 aa).

Disordered regions lie at residues 1–23 (MDQDAFILKEDSEVEREAPGGRE) and 38–320 (SEPT…GIGE). Residues 7–20 (ILKEDSEVEREAPG) are compositionally biased toward basic and acidic residues. Residues 33-41 (DAVLSSEPT) are N0 binding. Over residues 50-59 (LHNTINTPQG) the composition is skewed to polar residues. Phosphoserine; by host is present on Ser-68. Positions 83 to 101 (RSGEESRVSGRTSKPEAEA) are enriched in basic and acidic residues. Phosphoserine; by host is present on Ser-125. The segment covering 150–168 (GIEDENREMAAHPDKRGED) has biased composition (basic and acidic residues). A compositionally biased stretch (polar residues) spans 191-206 (ASNNGRSMEPGSSHSA). A phosphoserine; by host mark is found at Ser-192, Ser-249, Ser-257, and Ser-260. Multimerization stretches follow at residues 344 to 411 (FESS…KRFS) and 362 to 432 (ANYA…HIIT). Positions 345–412 (ESSRDASYVF…FRDIYKRFSE (68 aa)) are bipartite nucleocapsid binding domain 1. Residues 364–429 (YAEMTFNVCG…LLMSNLSTLH (66 aa)) are a coiled coil. L protein binding stretches follow at residues 412–445 (EYQKEQNSLLMSNLSTLHIITDRGGKTDNTDSLT) and 413–445 (YQKEQNSLLMSNLSTLHIITDRGGKTDNTDSLT). Phosphoserine; by host occurs at positions 447 and 449. A bipartite nucleocapsid binding domain 2 region spans residues 479–568 (DLIREDEFRD…VEEDIESLTN (90 aa)). The interval 479-568 (DLIREDEFRD…VEEDIESLTN (90 aa)) is interaction with the nucleocapsid (N-RNA). Residues 495-516 (YQERDTEPRASNASRLLPSKEK) are disordered. The tract at residues 547 to 566 (KTDQEVKAVMELVEEDIESL) is formation of N-RNA complex involved in transcription and replication.

The protein belongs to the respirovirus P protein family. In terms of assembly, homotetramer. Interacts (via multimerization domain) with polymerase L; this interaction forms the polymerase complex. Interacts (via N-terminus) with N0; this interaction allows P to chaperon N0 before encapsidation and form the N-P complex. Interacts (via C-terminus) with N-RNA template; this interaction positions the polymerase on the template. In terms of processing, phosphorylated by PKC/PRKCZ, and other unknown kinases. Phosphorylation is necessary for viral transcription and replication. The N-terminus contains the majority of phosphorylated sites. Ser-249 is the major site of phosphorylation, but is not necessary for most functions.

It localises to the host cytoplasm. In terms of biological role, essential cofactor of the RNA polymerase L that plays a central role in the transcription and replication by forming the polymerase complex with RNA polymerase L and recruiting L to the genomic N-RNA template for RNA synthesis. Also plays a central role in the encapsidation of nascent RNA chains by forming the encapsidation complex with the nucleocapsid protein N (N-P complex). Acts as a chaperone for newly synthesized free N protein, so-called N0, allowing encapsidation of nascent RNA chains during replication. The nucleoprotein protein N prevents excessive phosphorylation of P, which leads to down-regulation of viral transcription/ replication. Participates, together with N, in the formation of viral factories (viroplasms), which are large inclusions in the host cytoplasm where replication takes place. Recruits host PI4KB and remodel the host endoplasmic reticulum membrane to form viral replication factories. The sequence is that of Phosphoprotein (P/V/C) from Sendai virus (strain Fushimi) (SeV).